The following is a 298-amino-acid chain: Probable phosphoserine phosphatase (298 aa).

The active-site Nucleophile is Asp82. Mg(2+) contacts are provided by Asp82 and Asp84. The active-site Proton donor is the Asp84. Substrate is bound by residues Glu91, Arg127, 170–171, and Lys217; that span reads SG. Asp240 is a Mg(2+) binding site. Residue Asn243 coordinates substrate.

It belongs to the HAD-like hydrolase superfamily. SerB family. Mg(2+) is required as a cofactor.

It carries out the reaction O-phospho-L-serine + H2O = L-serine + phosphate. It catalyses the reaction O-phospho-D-serine + H2O = D-serine + phosphate. It functions in the pathway amino-acid biosynthesis; L-serine biosynthesis; L-serine from 3-phospho-D-glycerate: step 3/3. The sequence is that of Probable phosphoserine phosphatase from Schizosaccharomyces pombe (strain 972 / ATCC 24843) (Fission yeast).